Reading from the N-terminus, the 381-residue chain is Cytochrome b (381 aa).

4 helical membrane passes run 33 to 53, 77 to 98, 113 to 133, and 178 to 198; these read FGSL…FLAM, WLIR…FLHV, WNIG…GYVL, and FFAF…VHLL. Heme b is bound by residues histidine 83 and histidine 97. Heme b is bound by residues histidine 182 and histidine 196. Residue histidine 201 coordinates a ubiquinone. A run of 4 helical transmembrane segments spans residues 226-246, 288-308, 320-340, and 347-367; these read IKDA…ALFS, LGGV…PLLH, VSQT…WIGG, and FIII…VLMP.

This sequence belongs to the cytochrome b family. As to quaternary structure, the cytochrome bc1 complex contains 11 subunits: 3 respiratory subunits (MT-CYB, CYC1 and UQCRFS1), 2 core proteins (UQCRC1 and UQCRC2) and 6 low-molecular weight proteins (UQCRH/QCR6, UQCRB/QCR7, UQCRQ/QCR8, UQCR10/QCR9, UQCR11/QCR10 and a cleavage product of UQCRFS1). This cytochrome bc1 complex then forms a dimer. Heme b serves as cofactor.

Its subcellular location is the mitochondrion inner membrane. Functionally, component of the ubiquinol-cytochrome c reductase complex (complex III or cytochrome b-c1 complex) that is part of the mitochondrial respiratory chain. The b-c1 complex mediates electron transfer from ubiquinol to cytochrome c. Contributes to the generation of a proton gradient across the mitochondrial membrane that is then used for ATP synthesis. This chain is Cytochrome b (MT-CYB), found in Ningaui yvonnae (Southern ningaui).